Here is a 423-residue protein sequence, read N- to C-terminus: Diaminobutyrate--2-oxoglutarate transaminase (423 aa).

Lys271 is modified (N6-(pyridoxal phosphate)lysine).

Belongs to the class-III pyridoxal-phosphate-dependent aminotransferase family. The cofactor is pyridoxal 5'-phosphate.

It carries out the reaction L-2,4-diaminobutanoate + 2-oxoglutarate = L-aspartate 4-semialdehyde + L-glutamate. Its pathway is amine and polyamine biosynthesis; ectoine biosynthesis; L-ectoine from L-aspartate 4-semialdehyde: step 1/3. Functionally, catalyzes reversively the conversion of L-aspartate beta-semialdehyde (ASA) to L-2,4-diaminobutyrate (DABA) by transamination with L-glutamate. This is Diaminobutyrate--2-oxoglutarate transaminase (ectB) from Streptomyces avermitilis (strain ATCC 31267 / DSM 46492 / JCM 5070 / NBRC 14893 / NCIMB 12804 / NRRL 8165 / MA-4680).